A 164-amino-acid chain; its full sequence is Biotin carboxyl carrier protein of acetyl-CoA carboxylase (164 aa).

Residues 86-162 (GDFIVSPLVG…QFGSKLFRIV (77 aa)) enclose the Biotinyl-binding domain. Lysine 128 carries the N6-biotinyllysine modification.

Homodimer.

The protein operates within lipid metabolism; fatty acid biosynthesis. Its function is as follows. This protein is a component of the acetyl coenzyme A carboxylase complex; first, biotin carboxylase catalyzes the carboxylation of the carrier protein and then the transcarboxylase transfers the carboxyl group to form malonyl-CoA. In Chlamydia trachomatis serovar D (strain ATCC VR-885 / DSM 19411 / UW-3/Cx), this protein is Biotin carboxyl carrier protein of acetyl-CoA carboxylase (accB).